A 122-amino-acid chain; its full sequence is Large ribosomal subunit protein uL14c (122 aa).

This sequence belongs to the universal ribosomal protein uL14 family. In terms of assembly, part of the 50S ribosomal subunit.

It is found in the plastid. The protein localises to the chloroplast. In terms of biological role, binds to 23S rRNA. This is Large ribosomal subunit protein uL14c from Oltmannsiellopsis viridis (Marine flagellate).